A 66-amino-acid chain; its full sequence is Large ribosomal subunit protein uL29 (66 aa).

The protein belongs to the universal ribosomal protein uL29 family.

The chain is Large ribosomal subunit protein uL29 from Rhizobium rhizogenes (strain K84 / ATCC BAA-868) (Agrobacterium radiobacter).